A 214-amino-acid chain; its full sequence is MSCDLVEWKIESSPIDYQEAVYFMQRKVDSISDGLQKELVWLLEHPALYTAGTGATVEDLLASNLLPVYSTNRGGKYTYHGPGQRIAYVMLNLKTRNKCNVRLYVKTLGDWIINTLSHFSIKSYFNPDLIGVWVTHNGIEKKIAAFGIRIRKWITYHGVSVNIYTDLSHYLGIVPCGIKEYGVTSFKQLGVNVSYEEFDIVLEKKFNEIFSSFN.

The BPL/LPL catalytic domain maps to 34–214 (GLQKELVWLL…KFNEIFSSFN (181 aa)). Substrate is bound by residues 73–80 (RGGKYTYH), 145–147 (AFG), and 158–160 (GVS). C176 serves as the catalytic Acyl-thioester intermediate.

The protein belongs to the LipB family.

The protein resides in the cytoplasm. It carries out the reaction octanoyl-[ACP] + L-lysyl-[protein] = N(6)-octanoyl-L-lysyl-[protein] + holo-[ACP] + H(+). It functions in the pathway protein modification; protein lipoylation via endogenous pathway; protein N(6)-(lipoyl)lysine from octanoyl-[acyl-carrier-protein]: step 1/2. Functionally, catalyzes the transfer of endogenously produced octanoic acid from octanoyl-acyl-carrier-protein onto the lipoyl domains of lipoate-dependent enzymes. Lipoyl-ACP can also act as a substrate although octanoyl-ACP is likely to be the physiological substrate. In Ehrlichia canis (strain Jake), this protein is Octanoyltransferase.